The sequence spans 596 residues: Elongation factor 4 (596 aa).

One can recognise a tr-type G domain in the interval 2–184; the sequence is RNIRNFSIIA…AIVHRIPPPT (183 aa). GTP contacts are provided by residues 14–19 and 131–134; these read DHGKST and NKID.

It belongs to the TRAFAC class translation factor GTPase superfamily. Classic translation factor GTPase family. LepA subfamily.

The protein localises to the cell inner membrane. It carries out the reaction GTP + H2O = GDP + phosphate + H(+). In terms of biological role, required for accurate and efficient protein synthesis under certain stress conditions. May act as a fidelity factor of the translation reaction, by catalyzing a one-codon backward translocation of tRNAs on improperly translocated ribosomes. Back-translocation proceeds from a post-translocation (POST) complex to a pre-translocation (PRE) complex, thus giving elongation factor G a second chance to translocate the tRNAs correctly. Binds to ribosomes in a GTP-dependent manner. The sequence is that of Elongation factor 4 from Xanthomonas oryzae pv. oryzae (strain PXO99A).